We begin with the raw amino-acid sequence, 877 residues long: Alanine--tRNA ligase (877 aa).

4 residues coordinate Zn(2+): His561, His565, Cys669, and His673.

The protein belongs to the class-II aminoacyl-tRNA synthetase family. Zn(2+) serves as cofactor.

The protein resides in the cytoplasm. It catalyses the reaction tRNA(Ala) + L-alanine + ATP = L-alanyl-tRNA(Ala) + AMP + diphosphate. Functionally, catalyzes the attachment of alanine to tRNA(Ala) in a two-step reaction: alanine is first activated by ATP to form Ala-AMP and then transferred to the acceptor end of tRNA(Ala). Also edits incorrectly charged Ser-tRNA(Ala) and Gly-tRNA(Ala) via its editing domain. The sequence is that of Alanine--tRNA ligase from Endomicrobium trichonymphae.